The chain runs to 310 residues: MAEMNLTLVTEFLLIAFTEYPEWALPLFLLFLFMYLITVLGNLEMIILILMDHQLHAPMYFLLSHLAFMDVCYSSITVPQMLAVLLEHGAALSYTRCAAQFFLFTFFGSIDCYLLALMAYDRYLAVCQPLLYVTILTQQARLSLVAGAYVAGLISALVRTVSAFTLSFCGTSEIDFIFCDLPPLLKLTCGESYTQEVLIIMFAIFVIPASMVVILVSYLFIIVAIMGIPAGSQAKTFSTCTSHLTAVSLFFGTLIFMYLRGNSDQSSEKNRVVSVLYTEVIPMLNPLIYSLRNKEVKEALRKILNRAKLS.

At 1-25 (MAEMNLTLVTEFLLIAFTEYPEWAL) the chain is on the extracellular side. An N-linked (GlcNAc...) asparagine glycan is attached at asparagine 5. Residues 26 to 46 (PLFLLFLFMYLITVLGNLEMI) traverse the membrane as a helical segment. Topologically, residues 47–54 (ILILMDHQ) are cytoplasmic. Residues 55-75 (LHAPMYFLLSHLAFMDVCYSS) form a helical membrane-spanning segment. At 76–99 (ITVPQMLAVLLEHGAALSYTRCAA) the chain is on the extracellular side. A disulfide bond links cysteine 97 and cysteine 189. A helical transmembrane segment spans residues 100 to 120 (QFFLFTFFGSIDCYLLALMAY). Residues 121–139 (DRYLAVCQPLLYVTILTQQ) lie on the Cytoplasmic side of the membrane. The chain crosses the membrane as a helical span at residues 140 to 160 (ARLSLVAGAYVAGLISALVRT). Over 161–197 (VSAFTLSFCGTSEIDFIFCDLPPLLKLTCGESYTQEV) the chain is Extracellular. The chain crosses the membrane as a helical span at residues 198–217 (LIIMFAIFVIPASMVVILVS). The Cytoplasmic segment spans residues 218-236 (YLFIIVAIMGIPAGSQAKT). Residues 237–257 (FSTCTSHLTAVSLFFGTLIFM) traverse the membrane as a helical segment. The Extracellular segment spans residues 258 to 270 (YLRGNSDQSSEKN). Residues 271–291 (RVVSVLYTEVIPMLNPLIYSL) traverse the membrane as a helical segment. The Cytoplasmic segment spans residues 292–310 (RNKEVKEALRKILNRAKLS).

This sequence belongs to the G-protein coupled receptor 1 family.

The protein localises to the cell membrane. Its function is as follows. Odorant receptor. This chain is Olfactory receptor 9Q1 (OR9Q1), found in Homo sapiens (Human).